Consider the following 229-residue polypeptide: Mediator of RNA polymerase II transcription subunit 7 (229 aa).

The protein belongs to the Mediator complex subunit 7 family. As to quaternary structure, component of the Mediator complex.

Its subcellular location is the nucleus. Its function is as follows. Component of the Mediator complex, a coactivator involved in the regulated transcription of nearly all RNA polymerase II-dependent genes. Mediator functions as a bridge to convey information from gene-specific regulatory proteins to the basal RNA polymerase II transcription machinery. Mediator is recruited to promoters by direct interactions with regulatory proteins and serves as a scaffold for the assembly of a functional preinitiation complex with RNA polymerase II and the general transcription factors. The polypeptide is Mediator of RNA polymerase II transcription subunit 7 (med7) (Xenopus tropicalis (Western clawed frog)).